Reading from the N-terminus, the 591-residue chain is Formate--tetrahydrofolate ligase (591 aa).

ATP is bound at residue 74–81 (TPLGEGKS).

This sequence belongs to the formate--tetrahydrofolate ligase family.

It carries out the reaction (6S)-5,6,7,8-tetrahydrofolate + formate + ATP = (6R)-10-formyltetrahydrofolate + ADP + phosphate. It participates in one-carbon metabolism; tetrahydrofolate interconversion. In Lawsonia intracellularis (strain PHE/MN1-00), this protein is Formate--tetrahydrofolate ligase.